We begin with the raw amino-acid sequence, 1800 residues long: U3 small nucleolar RNA-associated protein 10 (1800 aa).

2 HEAT repeats span residues 426 to 467 and 581 to 619; these read FTQS…TTPA and DVDLQALLPFLLVALADSSERVRREAAGVLAAIGSLYKK. Transmembrane regions (helical) follow at residues 944-964 and 1000-1020; these read IQSGLSYLLSLTLGSLLAIVN and ALLLVAGLSVIAPELVLHSVM. HEAT repeat units follow at residues 1043 to 1081, 1250 to 1288, 1294 to 1333, and 1755 to 1793; these read DQTIDQVVPALIQSLRNQKRDVVSGTSELLLSFTAAFEH, TLSLVDFLDTIEVLLQRRNDELRRKVLRLLEGRLRQNPE, QHRMLDFLPTLVNIIQSSPDILLKHAAVACIDRIAEKYGR, and LALLPEMLPYISELMEDEDENVEREVRKWVKQIEDVLGE.

It belongs to the HEATR1/UTP10 family. As to quaternary structure, component of the ribosomal small subunit (SSU) processome.

Its subcellular location is the nucleus. It is found in the nucleolus. The protein localises to the membrane. Its function is as follows. Involved in nucleolar processing of pre-18S ribosomal RNA. Involved in ribosome biosynthesis. This Aspergillus niger (strain ATCC MYA-4892 / CBS 513.88 / FGSC A1513) protein is U3 small nucleolar RNA-associated protein 10.